We begin with the raw amino-acid sequence, 392 residues long: N-acetylneuraminate epimerase (392 aa).

Residues methionine 1–alanine 35 form the signal peptide. Kelch repeat units follow at residues histidine 56 to serine 100, lysine 102 to asparagine 155, threonine 157 to asparagine 192, alanine 193 to lysine 238, leucine 241 to alanine 290, glutamine 312 to aspartate 361, and valine 363 to glutamate 392. Glutamate 247 functions as the Proton acceptor in the catalytic mechanism.

Belongs to the NanM family. In terms of assembly, homodimer.

It is found in the periplasm. It carries out the reaction N-acetyl-alpha-neuraminate = N-acetyl-beta-neuraminate. Functionally, converts alpha-N-acetylneuranimic acid (Neu5Ac) to the beta-anomer, accelerating the equilibrium between the alpha- and beta-anomers. Probably facilitates sialidase-negative bacteria to compete successfully for limited amounts of extracellular Neu5Ac, which is likely taken up in the beta-anomer. In addition, the rapid removal of sialic acid from solution might be advantageous to the bacterium to damp down host responses. The polypeptide is N-acetylneuraminate epimerase (Yersinia enterocolitica serotype O:8 / biotype 1B (strain NCTC 13174 / 8081)).